A 106-amino-acid chain; its full sequence is Iron-sulfur cluster assembly protein CyaY (106 aa).

It belongs to the frataxin family.

In terms of biological role, involved in iron-sulfur (Fe-S) cluster assembly. May act as a regulator of Fe-S biogenesis. The polypeptide is Iron-sulfur cluster assembly protein CyaY (Photorhabdus laumondii subsp. laumondii (strain DSM 15139 / CIP 105565 / TT01) (Photorhabdus luminescens subsp. laumondii)).